The chain runs to 696 residues: Polyribonucleotide nucleotidyltransferase (696 aa).

Residues Asp-486 and Asp-492 each contribute to the Mg(2+) site. The 60-residue stretch at 553–612 (PRIIVRNIPKDRIGELIGPGGKNVRGISELTGAELYIEDDGRVTISGSNQESAEKAAKMV) folds into the KH domain. Positions 622 to 690 (GKIYEGKVKR…KTGKIDLSRK (69 aa)) constitute an S1 motif domain.

Belongs to the polyribonucleotide nucleotidyltransferase family. Requires Mg(2+) as cofactor.

Its subcellular location is the cytoplasm. It catalyses the reaction RNA(n+1) + phosphate = RNA(n) + a ribonucleoside 5'-diphosphate. In terms of biological role, involved in mRNA degradation. Catalyzes the phosphorolysis of single-stranded polyribonucleotides processively in the 3'- to 5'-direction. This is Polyribonucleotide nucleotidyltransferase from Leptospira borgpetersenii serovar Hardjo-bovis (strain L550).